The sequence spans 257 residues: 3-deoxy-manno-octulosonate cytidylyltransferase (257 aa).

This sequence belongs to the KdsB family.

The protein localises to the cytoplasm. It catalyses the reaction 3-deoxy-alpha-D-manno-oct-2-ulosonate + CTP = CMP-3-deoxy-beta-D-manno-octulosonate + diphosphate. Its pathway is nucleotide-sugar biosynthesis; CMP-3-deoxy-D-manno-octulosonate biosynthesis; CMP-3-deoxy-D-manno-octulosonate from 3-deoxy-D-manno-octulosonate and CTP: step 1/1. It participates in bacterial outer membrane biogenesis; lipopolysaccharide biosynthesis. Functionally, activates KDO (a required 8-carbon sugar) for incorporation into bacterial lipopolysaccharide in Gram-negative bacteria. The protein is 3-deoxy-manno-octulosonate cytidylyltransferase of Halorhodospira halophila (strain DSM 244 / SL1) (Ectothiorhodospira halophila (strain DSM 244 / SL1)).